Here is a 158-residue protein sequence, read N- to C-terminus: Lipoprotein signal peptidase (158 aa).

Transmembrane regions (helical) follow at residues 7–27 (LFWI…YWVV), 38–58 (LLTG…FSLL), 68–88 (LSLG…TLNL), and 92–112 (LGYG…FVLG). Active-site residues include D116 and D132. A helical membrane pass occupies residues 125–145 (FPVFNVADSFISIGIVFLLIA).

Belongs to the peptidase A8 family.

The protein resides in the cell inner membrane. The enzyme catalyses Release of signal peptides from bacterial membrane prolipoproteins. Hydrolyzes -Xaa-Yaa-Zaa-|-(S,diacylglyceryl)Cys-, in which Xaa is hydrophobic (preferably Leu), and Yaa (Ala or Ser) and Zaa (Gly or Ala) have small, neutral side chains.. The protein operates within protein modification; lipoprotein biosynthesis (signal peptide cleavage). Its function is as follows. This protein specifically catalyzes the removal of signal peptides from prolipoproteins. The sequence is that of Lipoprotein signal peptidase from Nostoc punctiforme (strain ATCC 29133 / PCC 73102).